A 146-amino-acid chain; its full sequence is U-scoloptoxin(16)-Er1a (146 aa).

A signal peptide spans 1 to 26 (MNTVSVVQFLAVGCAVFVLYGRGVFA).

The protein belongs to the scoloptoxin-16 family. In terms of processing, contains 4 disulfide bonds. As to expression, expressed by the venom gland.

It is found in the secreted. This Ethmostigmus rubripes (Giant centipede) protein is U-scoloptoxin(16)-Er1a.